We begin with the raw amino-acid sequence, 309 residues long: Biotin synthase (309 aa).

The 225-residue stretch at 35-259 folds into the Radical SAM core domain; the sequence is NKIQISSLLS…MIPKSYIRLS (225 aa). Positions 50, 54, and 57 each coordinate [4Fe-4S] cluster. The [2Fe-2S] cluster site is built by Cys-94, Cys-125, Cys-185, and Arg-257.

It belongs to the radical SAM superfamily. Biotin synthase family. In terms of assembly, homodimer. It depends on [4Fe-4S] cluster as a cofactor. Requires [2Fe-2S] cluster as cofactor.

It catalyses the reaction (4R,5S)-dethiobiotin + (sulfur carrier)-SH + 2 reduced [2Fe-2S]-[ferredoxin] + 2 S-adenosyl-L-methionine = (sulfur carrier)-H + biotin + 2 5'-deoxyadenosine + 2 L-methionine + 2 oxidized [2Fe-2S]-[ferredoxin]. Its pathway is cofactor biosynthesis; biotin biosynthesis; biotin from 7,8-diaminononanoate: step 2/2. Functionally, catalyzes the conversion of dethiobiotin (DTB) to biotin by the insertion of a sulfur atom into dethiobiotin via a radical-based mechanism. The sequence is that of Biotin synthase from Rickettsia felis (strain ATCC VR-1525 / URRWXCal2) (Rickettsia azadi).